A 205-amino-acid polypeptide reads, in one-letter code: Thiamine-phosphate synthase (205 aa).

4-amino-2-methyl-5-(diphosphooxymethyl)pyrimidine contacts are provided by residues 34–38 (QLRCK) and asparagine 66. Residues aspartate 67 and aspartate 86 each coordinate Mg(2+). 4-amino-2-methyl-5-(diphosphooxymethyl)pyrimidine is bound at residue serine 105. Residue 131–133 (TTT) coordinates 2-[(2R,5Z)-2-carboxy-4-methylthiazol-5(2H)-ylidene]ethyl phosphate. Residue lysine 134 coordinates 4-amino-2-methyl-5-(diphosphooxymethyl)pyrimidine. Glycine 163 serves as a coordination point for 2-[(2R,5Z)-2-carboxy-4-methylthiazol-5(2H)-ylidene]ethyl phosphate.

Belongs to the thiamine-phosphate synthase family. The cofactor is Mg(2+).

It catalyses the reaction 2-[(2R,5Z)-2-carboxy-4-methylthiazol-5(2H)-ylidene]ethyl phosphate + 4-amino-2-methyl-5-(diphosphooxymethyl)pyrimidine + 2 H(+) = thiamine phosphate + CO2 + diphosphate. The enzyme catalyses 2-(2-carboxy-4-methylthiazol-5-yl)ethyl phosphate + 4-amino-2-methyl-5-(diphosphooxymethyl)pyrimidine + 2 H(+) = thiamine phosphate + CO2 + diphosphate. It carries out the reaction 4-methyl-5-(2-phosphooxyethyl)-thiazole + 4-amino-2-methyl-5-(diphosphooxymethyl)pyrimidine + H(+) = thiamine phosphate + diphosphate. It participates in cofactor biosynthesis; thiamine diphosphate biosynthesis; thiamine phosphate from 4-amino-2-methyl-5-diphosphomethylpyrimidine and 4-methyl-5-(2-phosphoethyl)-thiazole: step 1/1. Its function is as follows. Condenses 4-methyl-5-(beta-hydroxyethyl)thiazole monophosphate (THZ-P) and 2-methyl-4-amino-5-hydroxymethyl pyrimidine pyrophosphate (HMP-PP) to form thiamine monophosphate (TMP). This is Thiamine-phosphate synthase from Neisseria meningitidis serogroup B (strain ATCC BAA-335 / MC58).